Reading from the N-terminus, the 675-residue chain is Methionine--tRNA ligase (675 aa).

Residues 12-22 (PYANGPIHLGH) carry the 'HIGH' region motif. Residues C143, C146, C156, and C159 each contribute to the Zn(2+) site. The 'KMSKS' region motif lies at 328–332 (KMSKS). K331 is an ATP binding site. One can recognise a tRNA-binding domain in the interval 574–675 (DFAKVDLRIA…QGAQPGMRVK (102 aa)).

The protein belongs to the class-I aminoacyl-tRNA synthetase family. MetG type 1 subfamily. As to quaternary structure, homodimer. The cofactor is Zn(2+).

The protein localises to the cytoplasm. The catalysed reaction is tRNA(Met) + L-methionine + ATP = L-methionyl-tRNA(Met) + AMP + diphosphate. In terms of biological role, is required not only for elongation of protein synthesis but also for the initiation of all mRNA translation through initiator tRNA(fMet) aminoacylation. The protein is Methionine--tRNA ligase of Alkalilimnicola ehrlichii (strain ATCC BAA-1101 / DSM 17681 / MLHE-1).